A 106-amino-acid polypeptide reads, in one-letter code: Large ribosomal subunit protein uL24 (106 aa).

Belongs to the universal ribosomal protein uL24 family. Part of the 50S ribosomal subunit.

In terms of biological role, one of two assembly initiator proteins, it binds directly to the 5'-end of the 23S rRNA, where it nucleates assembly of the 50S subunit. Functionally, one of the proteins that surrounds the polypeptide exit tunnel on the outside of the subunit. In Azobacteroides pseudotrichonymphae genomovar. CFP2, this protein is Large ribosomal subunit protein uL24.